The chain runs to 218 residues: Thiopurine S-methyltransferase (218 aa).

Residues tryptophan 10, leucine 45, glutamate 66, and arginine 123 each coordinate S-adenosyl-L-methionine.

It belongs to the class I-like SAM-binding methyltransferase superfamily. TPMT family.

It is found in the cytoplasm. The enzyme catalyses S-adenosyl-L-methionine + a thiopurine = S-adenosyl-L-homocysteine + a thiopurine S-methylether.. In Shewanella oneidensis (strain ATCC 700550 / JCM 31522 / CIP 106686 / LMG 19005 / NCIMB 14063 / MR-1), this protein is Thiopurine S-methyltransferase.